The primary structure comprises 624 residues: Chaperone protein HtpG (624 aa).

Residues 1-336 (MKTQKKEVYN…SSDLPLNISR (336 aa)) are a; substrate-binding. The tract at residues 337–552 (EILQDNSITE…STEMTTQMAK (216 aa)) is b. Positions 553–624 (LFSAAGQSVP…ISRMNKLLIK (72 aa)) are c.

Belongs to the heat shock protein 90 family. In terms of assembly, homodimer.

It is found in the cytoplasm. Functionally, molecular chaperone. Has ATPase activity. The protein is Chaperone protein HtpG of Buchnera aphidicola subsp. Acyrthosiphon pisum (strain APS) (Acyrthosiphon pisum symbiotic bacterium).